We begin with the raw amino-acid sequence, 265 residues long: Thiazole synthase (265 aa).

The active-site Schiff-base intermediate with DXP is the lysine 106. 1-deoxy-D-xylulose 5-phosphate is bound by residues glycine 167, 193–194 (AG), and 215–216 (NS).

It belongs to the ThiG family. Homotetramer. Forms heterodimers with either ThiH or ThiS.

The protein resides in the cytoplasm. It catalyses the reaction [ThiS sulfur-carrier protein]-C-terminal-Gly-aminoethanethioate + 2-iminoacetate + 1-deoxy-D-xylulose 5-phosphate = [ThiS sulfur-carrier protein]-C-terminal Gly-Gly + 2-[(2R,5Z)-2-carboxy-4-methylthiazol-5(2H)-ylidene]ethyl phosphate + 2 H2O + H(+). It functions in the pathway cofactor biosynthesis; thiamine diphosphate biosynthesis. Its function is as follows. Catalyzes the rearrangement of 1-deoxy-D-xylulose 5-phosphate (DXP) to produce the thiazole phosphate moiety of thiamine. Sulfur is provided by the thiocarboxylate moiety of the carrier protein ThiS. In vitro, sulfur can be provided by H(2)S. The polypeptide is Thiazole synthase (Prochlorococcus marinus (strain MIT 9515)).